The following is a 109-amino-acid chain: Gliadoralin-A (109 aa).

The N-terminal stretch at 1–16 is a signal peptide; that stretch reads MLVILLMVVVLALSSA. Gln-17 carries the post-translational modification Pyrrolidone carboxylic acid. The segment at 17 to 109 is disordered; it reads QDPNRDFVVS…PRYQQPRRAV (93 aa). Residues 35-109 show a composition bias toward low complexity; it reads PSSQQGTVGG…PRYQQPRRAV (75 aa). The propeptide occupies 107–109; that stretch reads RAV.

Post-translationally, predominantly proteolytically processed at its C-terminus before secretion to produce the major form gliadoralin A 1-90. Further proteloytically processed after secretion to produce minor forms. Potential substrate of transglutaminase. In terms of tissue distribution, found in saliva (at protein level). Secreted from the submandibular gland.

Its subcellular location is the secreted. May play a role in the formation of the protective mucosal protein pellicle involved in the reinforcement and protection of oral mucosal epithelial surface. The sequence is that of Gliadoralin-A from Rattus norvegicus (Rat).